Consider the following 181-residue polypeptide: Cyclic AMP-dependent transcription factor ATF-3 (181 aa).

Positions 76–97 are disordered; that stretch reads VTKAEVAPEEDERKKRRRERNK. Residue Lys78 forms a Glycyl lysine isopeptide (Lys-Gly) (interchain with G-Cter in SUMO2) linkage. Residues 86–149 form the bZIP domain; sequence DERKKRRRER…QHLIYMLNLH (64 aa). The tract at residues 88-110 is basic motif; the sequence is RKKRRRERNKIAAAKCRNKKKEK. The leucine-zipper stretch occupies residues 114–142; the sequence is LQKESEKLESVNAELKAQIEELKNEKQHL. Thr162 bears the Phosphothreonine mark. Lys175 participates in a covalent cross-link: Glycyl lysine isopeptide (Lys-Gly) (interchain with G-Cter in SUMO2).

Belongs to the bZIP family. ATF subfamily. As to quaternary structure, binds DNA as a homodimer or a heterodimer. Interacts with KAT5; promoting KAT5 autoacetylation and KAT5 deubiquitination by USP7.

It localises to the nucleus. Its function is as follows. This protein binds the cAMP response element (CRE) (consensus: 5'-GTGACGT[AC][AG]-3'), a sequence present in many viral and cellular promoters. Represses transcription from promoters with ATF sites. It may repress transcription by stabilizing the binding of inhibitory cofactors at the promoter. The polypeptide is Cyclic AMP-dependent transcription factor ATF-3 (ATF3) (Bos taurus (Bovine)).